Here is a 135-residue protein sequence, read N- to C-terminus: Large ribosomal subunit protein eL32 (135 aa).

Residues 51 to 77 (GRDNKFRLKMKGKPRPPEPGYRSPRKV) are disordered.

This sequence belongs to the eukaryotic ribosomal protein eL32 family.

The sequence is that of Large ribosomal subunit protein eL32 (rpl32e) from Nanoarchaeum equitans (strain Kin4-M).